The sequence spans 260 residues: Tryptophan 2,3-dioxygenase (260 aa).

Substrate contacts are provided by residues 34–38 (FIVIH) and R100. Position 219 (H219) interacts with heme. T233 contacts substrate.

This sequence belongs to the tryptophan 2,3-dioxygenase family. In terms of assembly, homotetramer. Requires heme as cofactor.

The catalysed reaction is L-tryptophan + O2 = N-formyl-L-kynurenine. It participates in amino-acid degradation; L-tryptophan degradation via kynurenine pathway; L-kynurenine from L-tryptophan: step 1/2. In terms of biological role, heme-dependent dioxygenase that catalyzes the oxidative cleavage of the L-tryptophan (L-Trp) pyrrole ring and converts L-tryptophan to N-formyl-L-kynurenine. Catalyzes the oxidative cleavage of the indole moiety. This chain is Tryptophan 2,3-dioxygenase, found in Herpetosiphon aurantiacus (strain ATCC 23779 / DSM 785 / 114-95).